A 316-amino-acid polypeptide reads, in one-letter code: Aspartate-semialdehyde dehydrogenase (316 aa).

Residues 13–16 and 41–42 each bind NADP(+); these read TGAV and RS. Arginine 101 provides a ligand contact to phosphate. The active-site Acyl-thioester intermediate is the cysteine 132. Position 159 (glutamine 159) interacts with substrate. 162 to 163 serves as a coordination point for NADP(+); it reads SG. Lysine 216 provides a ligand contact to phosphate. Arginine 238 lines the substrate pocket. Histidine 245 functions as the Proton acceptor in the catalytic mechanism. Asparagine 316 is a binding site for NADP(+).

This sequence belongs to the aspartate-semialdehyde dehydrogenase family. Homodimer.

It carries out the reaction L-aspartate 4-semialdehyde + phosphate + NADP(+) = 4-phospho-L-aspartate + NADPH + H(+). It participates in amino-acid biosynthesis; L-lysine biosynthesis via DAP pathway; (S)-tetrahydrodipicolinate from L-aspartate: step 2/4. It functions in the pathway amino-acid biosynthesis; L-methionine biosynthesis via de novo pathway; L-homoserine from L-aspartate: step 2/3. Its pathway is amino-acid biosynthesis; L-threonine biosynthesis; L-threonine from L-aspartate: step 2/5. Catalyzes the NADPH-dependent formation of L-aspartate-semialdehyde (L-ASA) by the reductive dephosphorylation of L-aspartyl-4-phosphate. In Vibrio mimicus, this protein is Aspartate-semialdehyde dehydrogenase (asd).